Here is a 216-residue protein sequence, read N- to C-terminus: ATP-dependent Clp protease proteolytic subunit (216 aa).

Residue Ser109 is the Nucleophile of the active site. The active site involves His134.

Belongs to the peptidase S14 family. As to quaternary structure, fourteen ClpP subunits assemble into 2 heptameric rings which stack back to back to give a disk-like structure with a central cavity, resembling the structure of eukaryotic proteasomes.

The protein localises to the cytoplasm. The enzyme catalyses Hydrolysis of proteins to small peptides in the presence of ATP and magnesium. alpha-casein is the usual test substrate. In the absence of ATP, only oligopeptides shorter than five residues are hydrolyzed (such as succinyl-Leu-Tyr-|-NHMec, and Leu-Tyr-Leu-|-Tyr-Trp, in which cleavage of the -Tyr-|-Leu- and -Tyr-|-Trp bonds also occurs).. Cleaves peptides in various proteins in a process that requires ATP hydrolysis. Has a chymotrypsin-like activity. Plays a major role in the degradation of misfolded proteins. This is ATP-dependent Clp protease proteolytic subunit from Rhodospirillum rubrum (strain ATCC 11170 / ATH 1.1.1 / DSM 467 / LMG 4362 / NCIMB 8255 / S1).